Reading from the N-terminus, the 299-residue chain is MAPSQLPPIFNPTQQDIEQLLAAQCHLGSKNLQVHMEPYLWKTRPDGVNVINIGKTWEKILLAARIIAAVENPADICVISARPYGQRAVLKFAAHTGATAIAGRFTPGNFTNYITRSFKEPRLIIVTDPRTDSQAIKEASYVNIPVLALCDTDSPTDFVDVAIPTNNKGRHSIGLVWWMLAREVLRLRGTLATRETEWDVVPDLYFYRDPEAEENKEIADESKVATAEEVGAGAIESGFAGENWDTQGAGAGVPGTAFAAASAAGPTSWEADGADWAASSAPAAAGESWAETQPAEGKW.

Over residues 259 to 291 (AAASAAGPTSWEADGADWAASSAPAAAGESWAE) the composition is skewed to low complexity. The interval 259-299 (AAASAAGPTSWEADGADWAASSAPAAAGESWAETQPAEGKW) is disordered.

It belongs to the universal ribosomal protein uS2 family. Component of the small ribosomal subunit. Mature ribosomes consist of a small (40S) and a large (60S) subunit. The 40S subunit contains about 33 different proteins and 1 molecule of RNA (18S). The 60S subunit contains about 49 different proteins and 3 molecules of RNA (25S, 5.8S and 5S). Interacts with rps21.

Its subcellular location is the cytoplasm. Its function is as follows. Required for the assembly and/or stability of the 40S ribosomal subunit. Required for the processing of the 20S rRNA-precursor to mature 18S rRNA in a late step of the maturation of 40S ribosomal subunits. The chain is Small ribosomal subunit protein uS2 (rps0) from Aspergillus flavus (strain ATCC 200026 / FGSC A1120 / IAM 13836 / NRRL 3357 / JCM 12722 / SRRC 167).